The following is a 150-amino-acid chain: Avidin-related protein 6 (150 aa).

A signal peptide spans 1–24 (MVHATSPLLLLLLLSLALVAPGLS). One can recognise an Avidin-like domain in the interval 26 to 147 (RKCSLTGEWD…GYNNFTRQRT (122 aa)). Residues Cys28 and Cys105 are joined by a disulfide bond. Biotin contacts are provided by Asn36 and Ser40. A glycan (N-linked (GlcNAc...) asparagine) is linked at Asn54. Biotin-binding residues include Tyr57, Thr59, and Asp63. Residue Asn93 is glycosylated (N-linked (GlcNAc...) asparagine). Biotin is bound by residues Ser95, Ser99, and Asn140. Asn141 carries N-linked (GlcNAc...) asparagine glycosylation.

The protein belongs to the avidin/streptavidin family. In terms of assembly, homotetramer. In terms of processing, glycosylated.

The protein localises to the secreted. Forms a strong non-covalent specific complex with biotin. The polypeptide is Avidin-related protein 6 (AVR6) (Gallus gallus (Chicken)).